Consider the following 309-residue polypeptide: Ribonuclease Z (309 aa).

His-63, His-65, Asp-67, His-68, His-145, Asp-216, and His-274 together coordinate Zn(2+). The active-site Proton acceptor is Asp-67.

Belongs to the RNase Z family. As to quaternary structure, homodimer. Zn(2+) is required as a cofactor.

The catalysed reaction is Endonucleolytic cleavage of RNA, removing extra 3' nucleotides from tRNA precursor, generating 3' termini of tRNAs. A 3'-hydroxy group is left at the tRNA terminus and a 5'-phosphoryl group is left at the trailer molecule.. Its function is as follows. Zinc phosphodiesterase, which displays some tRNA 3'-processing endonuclease activity. Probably involved in tRNA maturation, by removing a 3'-trailer from precursor tRNA. This chain is Ribonuclease Z, found in Streptococcus pyogenes serotype M6 (strain ATCC BAA-946 / MGAS10394).